The chain runs to 498 residues: ATP synthase subunit beta, chloroplastic (498 aa).

172–179 is an ATP binding site; that stretch reads GGAGVGKT.

Belongs to the ATPase alpha/beta chains family. As to quaternary structure, F-type ATPases have 2 components, CF(1) - the catalytic core - and CF(0) - the membrane proton channel. CF(1) has five subunits: alpha(3), beta(3), gamma(1), delta(1), epsilon(1). CF(0) has four main subunits: a(1), b(1), b'(1) and c(9-12).

It is found in the plastid. The protein localises to the chloroplast thylakoid membrane. It carries out the reaction ATP + H2O + 4 H(+)(in) = ADP + phosphate + 5 H(+)(out). Produces ATP from ADP in the presence of a proton gradient across the membrane. The catalytic sites are hosted primarily by the beta subunits. The protein is ATP synthase subunit beta, chloroplastic of Panax ginseng (Korean ginseng).